We begin with the raw amino-acid sequence, 156 residues long: Small ribosomal subunit protein uS7 (156 aa).

This sequence belongs to the universal ribosomal protein uS7 family. As to quaternary structure, part of the 30S ribosomal subunit. Contacts proteins S9 and S11.

In terms of biological role, one of the primary rRNA binding proteins, it binds directly to 16S rRNA where it nucleates assembly of the head domain of the 30S subunit. Is located at the subunit interface close to the decoding center, probably blocks exit of the E-site tRNA. This Hahella chejuensis (strain KCTC 2396) protein is Small ribosomal subunit protein uS7.